A 926-amino-acid polypeptide reads, in one-letter code: Neurofilament medium polypeptide (926 aa).

Positions 1-10 (MSYTLDSLGN) are enriched in polar residues. Disordered regions lie at residues 1 to 51 (MSYT…VSSS) and 79 to 102 (QSSS…SNEK). Serine 2 carries the post-translational modification N-acetylserine. The interval 2-104 (SYTLDSLGNP…KLSRSNEKEQ (103 aa)) is head. Over residues 21 to 44 (RSSFSRISGSPSSGFRSQSWSRGS) the composition is skewed to low complexity. Serine 30 is subject to Phosphoserine. Arginine 42 carries the omega-N-methylarginine modification. Residue threonine 47 is glycosylated (O-linked (GlcNAc) threonine). Position 99 is a phosphoserine (serine 99). Residues 101-412 (EKEQIQGLND…KLLEGEETRF (312 aa)) form the IF rod domain. Positions 105-136 (IQGLNDRFAGYIEKVHYLEQQNKEIEAEIQAL) are coil 1A. Positions 137–149 (RQKQASHAQLGDA) are linker 1. Residues 150 to 248 (YDQEIRELRA…EEEVADLLAQ (99 aa)) form a coil 1B region. Serine 226 is subject to Phosphoserine. The interval 249-265 (IQASHITVERKDYLKTD) is linker 12. A coil 2A region spans residues 266–287 (ISTALKEIRSQLESHSDQNMHQ). A linker 2 region spans residues 288–291 (AEEW). Residues 292–412 (FKCRYAKLTE…KLLEGEETRF (121 aa)) are coil 2B. At tyrosine 320 the chain carries Phosphotyrosine. 5 positions are modified to phosphoserine: serine 346, serine 418, serine 430, serine 468, and serine 484. A tail region spans residues 413 to 926 (STFAGSITGP…AIVKEVTQSD (514 aa)). The disordered stretch occupies residues 487-860 (EEVKEEEAEE…EKKGGDKSEE (374 aa)). The span at 490–507 (KEEEAEEKEEKEEAEEEV) shows a compositional bias: acidic residues. Copy 1 of the repeat occupies 512–516 (KSPVK). Positions 512–698 (KSPVKATAPE…KSPAPKSPVE (187 aa)) are 17 X 5 AA approximate tandem repeats of K-S-P-[TVEA]-[AKETP]. Serine 513 bears the Phosphoserine mark. The span at 523–543 (KEEEGEKEEEEGQEEEEEEEE) shows a compositional bias: acidic residues. Basic and acidic residues predominate over residues 544–563 (AAKSDQAEEGGSEKEGSSEK). Serine 547, serine 555, serine 560, and serine 561 each carry phosphoserine. A compositionally biased stretch (acidic residues) spans 564-584 (EEGEQEEEGETEAEGEGEEAA). At threonine 574 the chain carries Phosphothreonine. The span at 585–619 (AEAKEEKKMEEKAEEVAPKEELAAEAKVEKPEKAK) shows a compositional bias: basic and acidic residues. A run of 16 repeats spans residues 619 to 623 (KSPVA), 624 to 628 (KSPTT), 629 to 633 (KSPTA), 634 to 638 (KSPEA), 639 to 643 (KSPEA), 644 to 648 (KSPTA), 649 to 653 (KSPTA), 654 to 658 (KSPVA), 659 to 663 (KSPTA), 664 to 668 (KSPEA), 669 to 673 (KSPEA), 674 to 678 (KSPTA), 679 to 683 (KSPTA), 684 to 688 (KSPAA), 689 to 693 (KSPAP), and 694 to 698 (KSPVE). Phosphothreonine is present on threonine 628. 3 positions are modified to phosphoserine: serine 630, serine 635, and serine 640. A Phosphothreonine modification is found at threonine 647. Serine 650 and serine 655 each carry phosphoserine. 2 positions are modified to phosphoserine: serine 665 and serine 670. Residues 673-692 (AKSPTAKSPTAKSPAAKSPA) are compositionally biased toward low complexity. At threonine 677 the chain carries Phosphothreonine. Residues serine 680, serine 685, serine 690, serine 695, serine 727, serine 751, serine 757, serine 771, serine 831, and serine 847 each carry the phosphoserine modification. Composition is skewed to basic and acidic residues over residues 696-764 (PVEE…EEVP), 771-811 (SPEK…KEDI), and 826-838 (TKEK…EEKG). A compositionally biased stretch (basic and acidic residues) spans 849-860 (GDEKKGGDKSEE).

In terms of assembly, forms heterodimers with NEFL; which can further hetero-oligomerize (in vitro). Forms heterodimers with INA (in vitro). In terms of processing, phosphorylated on a number of serine residues in the repeated K-S-P tripeptide motif. Phosphorylation of NFH may result in the formation of interfilament cross-links that are important in the maintenance of axonal caliber. Phosphorylation seems to play a major role in the functioning of the larger neurofilament polypeptides (NF-M and NF-H), the levels of phosphorylation being altered developmentally and coincidentally with a change in the neurofilament function. Post-translationally, phosphorylated in the head and rod regions by the PKC kinase PKN1, leading to the inhibition of polymerization.

It is found in the cytoplasm. The protein localises to the cytoskeleton. It localises to the cell projection. Its subcellular location is the axon. Its function is as follows. Neurofilaments usually contain three intermediate filament proteins: NEFL, NEFM, and NEFH which are involved in the maintenance of neuronal caliber. May additionally cooperate with the neuronal intermediate filament proteins PRPH and INA to form neuronal filamentous networks. This chain is Neurofilament medium polypeptide (NEFM), found in Bos taurus (Bovine).